A 1072-amino-acid chain; its full sequence is 5'-3' exoribonuclease 2 (1072 aa).

Residues 118-144 (RRFRAAREAMEKEEDKQKFVELLKKQN) adopt a coiled-coil conformation. A CCHC-type zinc finger spans residues 269 to 286 (RLCKICGQKGHDAMNCKG). The segment covering 414 to 435 (KETEDRREAGFKRRKLADEARQ) has biased composition (basic and acidic residues). 4 disordered regions span residues 414-459 (KETE…GFSF), 509-577 (QGTS…AEPT), 865-911 (ASRS…GGGG), and 943-1072 (GGGY…RGYR). Positions 518 to 543 (AESTETPAETAAAAPATEEQAAPPAA) are enriched in low complexity. Over residues 892–911 (GPGGGQQGGRGRGGYQGGGG) the composition is skewed to gly residues. Residues 955 to 967 (GPPPGWQPPPPPG) are compositionally biased toward pro residues. Composition is skewed to gly residues over residues 983-1000 (AYGG…GSSR), 1025-1036 (YGQGGSRGGYQG), and 1056-1072 (GYRG…RGYR).

This sequence belongs to the 5'-3' exonuclease family. XRN2/RAT1 subfamily. Interacts with rai1; the interaction is direct, stabilizes exr-1 protein structure and may stimulate its exoribonuclease activity. The interaction also stimulates rai1 pyrophosphohydrolase activity, probably by recruiting it to mRNA substrates.

The protein resides in the nucleus. In terms of biological role, possesses 5'-&gt;3' exoribonuclease activity. Required for the processing of nuclear mRNA and rRNA precursors. May promote the termination of transcription by RNA polymerase II. Essential for vegetative cell growth and chromosome segregation. The polypeptide is 5'-3' exoribonuclease 2 (exr-1) (Neurospora crassa (strain ATCC 24698 / 74-OR23-1A / CBS 708.71 / DSM 1257 / FGSC 987)).